The following is a 147-amino-acid chain: Ribonuclease pancreatic gamma-type (147 aa).

An N-terminal signal peptide occupies residues 1–25; it reads MGLEKSFLLFSLLVLVLGWVQPSLG. Positions 35 and 38 each coordinate substrate. Histidine 40 serves as the catalytic Proton acceptor. 4 disulfide bridges follow: cysteine 54–cysteine 112, cysteine 68–cysteine 123, cysteine 86–cysteine 138, and cysteine 93–cysteine 100. Residues 69–73, lysine 94, and arginine 113 contribute to the substrate site; that span reads KPMNT. Histidine 142 (proton donor) is an active-site residue.

This sequence belongs to the pancreatic ribonuclease family. As to quaternary structure, monomer.

The protein localises to the secreted. It catalyses the reaction an [RNA] containing cytidine + H2O = an [RNA]-3'-cytidine-3'-phosphate + a 5'-hydroxy-ribonucleotide-3'-[RNA].. It carries out the reaction an [RNA] containing uridine + H2O = an [RNA]-3'-uridine-3'-phosphate + a 5'-hydroxy-ribonucleotide-3'-[RNA].. Endonuclease that catalyzes the cleavage of RNA on the 3' side of pyrimidine nucleotides. Acts on single-stranded and double-stranded RNA. The protein is Ribonuclease pancreatic gamma-type of Rattus rattus (Black rat).